Reading from the N-terminus, the 160-residue chain is Class II hydrophobin 8 (160 aa).

Disulfide bonds link cysteine 92/cysteine 141, cysteine 102/cysteine 132, cysteine 103/cysteine 115, and cysteine 142/cysteine 153.

It belongs to the cerato-ulmin hydrophobin family. In terms of assembly, homodimer. Homodimers further self-assemble to form highly ordered films at water-air interfaces through intermolecular interactions.

The protein resides in the secreted. It localises to the cell wall. Aerial growth, conidiation, and dispersal of filamentous fungi in the environment rely upon a capability of their secreting small amphipathic proteins called hydrophobins (HPBs) with low sequence identity. Class I can self-assemble into an outermost layer of rodlet bundles on aerial cell surfaces, conferring cellular hydrophobicity that supports fungal growth, development and dispersal; whereas Class II form highly ordered films at water-air interfaces through intermolecular interactions but contribute nothing to the rodlet structure. The protein is Class II hydrophobin 8 of Trichoderma asperellum (strain ATCC 204424 / CBS 433.97 / NBRC 101777).